The primary structure comprises 392 residues: S-adenosylmethionine synthase (392 aa).

Glu-10 contacts Mg(2+). His-16 contacts ATP. Glu-44 contacts K(+). Residues Glu-57 and Gln-100 each coordinate L-methionine. Residues 168–170 (DGK), 236–239 (SGRF), Asp-247, 253–254 (RK), Ala-270, Lys-274, and Lys-278 each bind ATP. Asp-247 contacts L-methionine. Lys-278 contributes to the L-methionine binding site.

This sequence belongs to the AdoMet synthase family. In terms of assembly, homotetramer. Requires Mn(2+) as cofactor. The cofactor is Mg(2+). It depends on Co(2+) as a cofactor. K(+) serves as cofactor.

The protein localises to the cytoplasm. The enzyme catalyses L-methionine + ATP + H2O = S-adenosyl-L-methionine + phosphate + diphosphate. It participates in amino-acid biosynthesis; S-adenosyl-L-methionine biosynthesis; S-adenosyl-L-methionine from L-methionine: step 1/1. In terms of biological role, catalyzes the formation of S-adenosylmethionine from methionine and ATP. The reaction comprises two steps that are both catalyzed by the same enzyme: formation of S-adenosylmethionine (AdoMet) and triphosphate, and subsequent hydrolysis of the triphosphate. The chain is S-adenosylmethionine synthase (SAMS) from Phaseolus lunatus (Lima bean).